We begin with the raw amino-acid sequence, 475 residues long: UDP-N-acetylmuramate--L-alanine ligase (475 aa).

125–131 (GTHGKTT) contacts ATP.

This sequence belongs to the MurCDEF family.

It is found in the cytoplasm. It carries out the reaction UDP-N-acetyl-alpha-D-muramate + L-alanine + ATP = UDP-N-acetyl-alpha-D-muramoyl-L-alanine + ADP + phosphate + H(+). It functions in the pathway cell wall biogenesis; peptidoglycan biosynthesis. In terms of biological role, cell wall formation. In Actinobacillus pleuropneumoniae serotype 5b (strain L20), this protein is UDP-N-acetylmuramate--L-alanine ligase.